A 207-amino-acid polypeptide reads, in one-letter code: Small ribosomal subunit protein uS4 (207 aa).

The tract at residues 32–55 is disordered; the sequence is CKLDSKPGQHGRTSGARTSDYGTQ. Residues 42-53 are compositionally biased toward polar residues; it reads GRTSGARTSDYG. Residues 97–158 enclose the S4 RNA-binding domain; that stretch reads SRLDNVVYRM…TKKKQARILE (62 aa).

It belongs to the universal ribosomal protein uS4 family. In terms of assembly, part of the 30S ribosomal subunit. Contacts protein S5. The interaction surface between S4 and S5 is involved in control of translational fidelity.

Functionally, one of the primary rRNA binding proteins, it binds directly to 16S rRNA where it nucleates assembly of the body of the 30S subunit. With S5 and S12 plays an important role in translational accuracy. The sequence is that of Small ribosomal subunit protein uS4 from Paraburkholderia phytofirmans (strain DSM 17436 / LMG 22146 / PsJN) (Burkholderia phytofirmans).